A 106-amino-acid polypeptide reads, in one-letter code: L-rhamnose mutarotase (106 aa).

A substrate-binding site is contributed by tyrosine 20. Histidine 24 serves as the catalytic Proton donor. Substrate contacts are provided by residues tyrosine 43 and 78 to 79; that span reads WW.

Belongs to the rhamnose mutarotase family. As to quaternary structure, homodimer.

It is found in the cytoplasm. The catalysed reaction is alpha-L-rhamnose = beta-L-rhamnose. Its pathway is carbohydrate metabolism; L-rhamnose metabolism. In terms of biological role, involved in the anomeric conversion of L-rhamnose. The chain is L-rhamnose mutarotase from Rhizobium etli (strain ATCC 51251 / DSM 11541 / JCM 21823 / NBRC 15573 / CFN 42).